Here is a 259-residue protein sequence, read N- to C-terminus: Pyridoxine 5'-phosphate synthase (259 aa).

Asn6 is a 3-amino-2-oxopropyl phosphate binding site. 8–9 (DH) lines the 1-deoxy-D-xylulose 5-phosphate pocket. Residue Arg17 coordinates 3-amino-2-oxopropyl phosphate. His42 serves as the catalytic Proton acceptor. The 1-deoxy-D-xylulose 5-phosphate site is built by Arg44 and His49. Catalysis depends on Glu69, which acts as the Proton acceptor. Thr99 serves as a coordination point for 1-deoxy-D-xylulose 5-phosphate. Residue His212 is the Proton donor of the active site. Residues Gly213 and 234–235 (GH) contribute to the 3-amino-2-oxopropyl phosphate site.

The protein belongs to the PNP synthase family. As to quaternary structure, homooctamer; tetramer of dimers.

It localises to the cytoplasm. It catalyses the reaction 3-amino-2-oxopropyl phosphate + 1-deoxy-D-xylulose 5-phosphate = pyridoxine 5'-phosphate + phosphate + 2 H2O + H(+). Its pathway is cofactor biosynthesis; pyridoxine 5'-phosphate biosynthesis; pyridoxine 5'-phosphate from D-erythrose 4-phosphate: step 5/5. Its function is as follows. Catalyzes the complicated ring closure reaction between the two acyclic compounds 1-deoxy-D-xylulose-5-phosphate (DXP) and 3-amino-2-oxopropyl phosphate (1-amino-acetone-3-phosphate or AAP) to form pyridoxine 5'-phosphate (PNP) and inorganic phosphate. The protein is Pyridoxine 5'-phosphate synthase of Nautilia profundicola (strain ATCC BAA-1463 / DSM 18972 / AmH).